The sequence spans 476 residues: DnaJ protein P58IPK homolog A (476 aa).

The first 28 residues, 1 to 28, serve as a signal peptide directing secretion; the sequence is MVAMARWPWRVLLPLLLLHSSPVFFVFA. 8 TPR repeats span residues 36–69, 70–103, 116–150, 152–184, 185–218, 231–264, 269–302, and 304–336; these read PSTL…EPNH, SEAY…KPGS, AQNA…SPDC, KAKL…DEDN, LDAL…DPEH, LVKK…DPDH, VHLY…DGEL, and DALT…SPQD. One can recognise a J domain in the interval 357–423; sequence DWYKILGISK…DKRVRYDRGE (67 aa).

Interacts with BIP1.

It localises to the endoplasmic reticulum lumen. May play a role in protein folding in the endoplasmic reticulum. In Oryza sativa subsp. japonica (Rice), this protein is DnaJ protein P58IPK homolog A.